Reading from the N-terminus, the 120-residue chain is UPF0231 protein NT01EI_0766 (120 aa).

This sequence belongs to the UPF0231 family.

The sequence is that of UPF0231 protein NT01EI_0766 from Edwardsiella ictaluri (strain 93-146).